A 291-amino-acid chain; its full sequence is 3-hydroxy-5-phosphonooxypentane-2,4-dione thiolase (291 aa).

The active-site Schiff-base intermediate with substrate is K203.

Belongs to the DeoC/FbaB aldolase family. Homodecamer.

Its subcellular location is the cytoplasm. The catalysed reaction is dihydroxyacetone phosphate + acetyl-CoA = 3-hydroxy-2,4-dioxopentyl phosphate + CoA. Involved in the degradation of phospho-AI-2, thereby terminating induction of the lsr operon and closing the AI-2 signaling cycle. Catalyzes the transfer of an acetyl moiety from 3-hydroxy-5-phosphonooxypentane-2,4-dione to CoA to form glycerone phosphate and acetyl-CoA. The chain is 3-hydroxy-5-phosphonooxypentane-2,4-dione thiolase from Escherichia coli (strain K12 / DH10B).